The sequence spans 424 residues: ATP-sensitive inward rectifier potassium channel 8 (424 aa).

Residues 1–69 lie on the Cytoplasmic side of the membrane; the sequence is MLARKSIIPE…IFTTLVDLKW (69 aa). The residue at position 6 (serine 6) is a Phosphoserine. Residues 70-94 traverse the membrane as a helical segment; that stretch reads RHTLVIFTMSFLCSWLLFAIMWWLV. The Extracellular segment spans residues 95 to 126; sequence AFAHGDIYAYMEKSGMEKSGLESTVCVTNVRS. An intramembrane region (helical; Pore-forming) is located at residues 127 to 138; it reads FTSAFLFSIEVQ. The segment at residues 139 to 145 is an intramembrane region (pore-forming); it reads VTIGFGG. A Selectivity filter motif is present at residues 140–145; sequence TIGFGG. The Extracellular segment spans residues 146–154; sequence RMMTEECPL. The chain crosses the membrane as a helical span at residues 155 to 176; it reads AITVLILQNIVGLIINAVMLGC. The Cytoplasmic portion of the chain corresponds to 177–424; that stretch reads IFMKTAQAHR…PEGNQNTSES (248 aa). The segment at 375 to 424 is disordered; the sequence is SHQNSLRKRNSMRRNNSMRRNNSIRRNNSSLMVPKVQFMTPEGNQNTSES. Residues 387 to 404 show a composition bias toward low complexity; that stretch reads RRNNSMRRNNSIRRNNSS.

The protein belongs to the inward rectifier-type potassium channel (TC 1.A.2.1) family. KCNJ8 subfamily. As to quaternary structure, interacts with ABCC9. In terms of tissue distribution, predominantly detected in fetal and adult heart.

It localises to the membrane. It catalyses the reaction K(+)(in) = K(+)(out). Inward rectifier potassium channels are characterized by a greater tendency to allow potassium to flow into the cell rather than out of it. Their voltage dependence is regulated by the concentration of extracellular potassium; as external potassium is raised, the voltage range of the channel opening shifts to more positive voltages. The inward rectification is mainly due to the blockage of outward current by internal magnesium. This channel is activated by internal ATP and can be blocked by external barium. Can form a sulfonylurea-sensitive but ATP-insensitive potassium channel with ABCC9. This chain is ATP-sensitive inward rectifier potassium channel 8 (KCNJ8), found in Homo sapiens (Human).